Reading from the N-terminus, the 163-residue chain is Nucleotide-binding protein NT01EI_1072 (163 aa).

This sequence belongs to the YajQ family.

Functionally, nucleotide-binding protein. The chain is Nucleotide-binding protein NT01EI_1072 from Edwardsiella ictaluri (strain 93-146).